The primary structure comprises 169 residues: Nicotinamide-nucleotide adenylyltransferase (169 aa).

The protein belongs to the archaeal NMN adenylyltransferase family.

It localises to the cytoplasm. The catalysed reaction is beta-nicotinamide D-ribonucleotide + ATP + H(+) = diphosphate + NAD(+). Its pathway is cofactor biosynthesis; NAD(+) biosynthesis; NAD(+) from nicotinamide D-ribonucleotide: step 1/1. The protein is Nicotinamide-nucleotide adenylyltransferase of Picrophilus torridus (strain ATCC 700027 / DSM 9790 / JCM 10055 / NBRC 100828 / KAW 2/3).